We begin with the raw amino-acid sequence, 305 residues long: J domain-containing protein 1 (305 aa).

The J domain occupies 91–163 (TPYEVLGLVK…SRRRMYDMYA (73 aa)). A helical transmembrane segment spans residues 212 to 232 (WGMVVWALCMLAGFQVMAFLI).

The protein belongs to the DnaJ family.

It is found in the mitochondrion membrane. Probable chaperone. The protein is J domain-containing protein 1 (JID1) of Eremothecium gossypii (strain ATCC 10895 / CBS 109.51 / FGSC 9923 / NRRL Y-1056) (Yeast).